The primary structure comprises 297 residues: Pyrroline-5-carboxylate reductase 1 (297 aa).

The protein belongs to the pyrroline-5-carboxylate reductase family.

It localises to the cytoplasm. It carries out the reaction L-proline + NADP(+) = (S)-1-pyrroline-5-carboxylate + NADPH + 2 H(+). The catalysed reaction is L-proline + NAD(+) = (S)-1-pyrroline-5-carboxylate + NADH + 2 H(+). It participates in amino-acid biosynthesis; L-proline biosynthesis; L-proline from L-glutamate 5-semialdehyde: step 1/1. Its function is as follows. Catalyzes the reduction of 1-pyrroline-5-carboxylate (PCA) to L-proline. The polypeptide is Pyrroline-5-carboxylate reductase 1 (proH) (Bacillus subtilis (strain 168)).